A 966-amino-acid chain; its full sequence is RNA polymerase-associated protein RapA (966 aa).

The 175-residue stretch at 163 to 337 (EVGRRIAPRV…FARLHLLDPN (175 aa)) folds into the Helicase ATP-binding domain. 176–183 (DEVGLGKT) lines the ATP pocket. A DEAH box motif is present at residues 283–286 (DEAH). The region spanning 489-643 (RVDWLINLVK…TCPMGAILHE (155 aa)) is the Helicase C-terminal domain.

This sequence belongs to the SNF2/RAD54 helicase family. RapA subfamily. In terms of assembly, interacts with the RNAP. Has a higher affinity for the core RNAP than for the holoenzyme. Its ATPase activity is stimulated by binding to RNAP.

Its function is as follows. Transcription regulator that activates transcription by stimulating RNA polymerase (RNAP) recycling in case of stress conditions such as supercoiled DNA or high salt concentrations. Probably acts by releasing the RNAP, when it is trapped or immobilized on tightly supercoiled DNA. Does not activate transcription on linear DNA. Probably not involved in DNA repair. This Histophilus somni (strain 129Pt) (Haemophilus somnus) protein is RNA polymerase-associated protein RapA.